Reading from the N-terminus, the 348-residue chain is [FeFe] hydrogenase maturase subunit HydE (348 aa).

The region spanning 49-268 (DEVHIRAIIE…LLPDSNIPAT (220 aa)) is the Radical SAM core domain. [4Fe-4S] cluster is bound by residues cysteine 63, cysteine 67, and cysteine 70. [2Fe-2S] cluster is bound by residues cysteine 311, cysteine 319, and cysteine 322.

Belongs to the radical SAM superfamily. HydE family. As to quaternary structure, monomer. [4Fe-4S] cluster serves as cofactor. The cofactor is [2Fe-2S] cluster.

Its function is as follows. Required for the maturation of the [FeFe]-hydrogenase HydA. Catalyzes the reductive cleavage of S-adenosyl-L-methionine (in vitro), suggesting it may contribute to the biosynthesis of an essential sulfur-containing ligand that binds to the hydrogenase active site [2Fe-2S] cluster. The polypeptide is [FeFe] hydrogenase maturase subunit HydE (Thermotoga maritima (strain ATCC 43589 / DSM 3109 / JCM 10099 / NBRC 100826 / MSB8)).